We begin with the raw amino-acid sequence, 232 residues long: Orotidine 5'-phosphate decarboxylase (232 aa).

Residues aspartate 11, lysine 33, aspartate 60–threonine 69, threonine 120, arginine 181, glutamine 191, glycine 211, and arginine 212 contribute to the substrate site. Lysine 62 (proton donor) is an active-site residue.

This sequence belongs to the OMP decarboxylase family. Type 1 subfamily. In terms of assembly, homodimer.

The catalysed reaction is orotidine 5'-phosphate + H(+) = UMP + CO2. It participates in pyrimidine metabolism; UMP biosynthesis via de novo pathway; UMP from orotate: step 2/2. Functionally, catalyzes the decarboxylation of orotidine 5'-monophosphate (OMP) to uridine 5'-monophosphate (UMP). This is Orotidine 5'-phosphate decarboxylase from Tolumonas auensis (strain DSM 9187 / NBRC 110442 / TA 4).